The following is a 122-amino-acid chain: Large ribosomal subunit protein uL14 (122 aa).

The protein belongs to the universal ribosomal protein uL14 family. In terms of assembly, part of the 50S ribosomal subunit. Forms a cluster with proteins L3 and L19. In the 70S ribosome, L14 and L19 interact and together make contacts with the 16S rRNA in bridges B5 and B8.

Binds to 23S rRNA. Forms part of two intersubunit bridges in the 70S ribosome. The protein is Large ribosomal subunit protein uL14 of Kocuria rhizophila (strain ATCC 9341 / DSM 348 / NBRC 103217 / DC2201).